The following is a 567-amino-acid chain: Zinc finger protein 512 (567 aa).

The tract at residues 1 to 32 (MSSRLGAVPATSGPTTFKQQRSTRIVGAKNSR) is disordered. A compositionally biased stretch (polar residues) spans 12–23 (SGPTTFKQQRST). Glycyl lysine isopeptide (Lys-Gly) (interchain with G-Cter in SUMO2) cross-links involve residues K18 and K84. The segment at 86–148 (AATSHVEGSG…QARRIRKEPP (63 aa)) is disordered. Residues 119–130 (KKHKLYGRKQRP) show a composition bias toward basic residues. The C2H2-type 1 zinc finger occupies 197–220 (FTCHHCGKQLRSLAGMKYHVMANH). Residue K227 forms a Glycyl lysine isopeptide (Lys-Gly) (interchain with G-Cter in SUMO2) linkage. The segment at 287–310 (LKCHHCGKPYRSKAGLAYHLRSEH) adopts a C2H2-type 2 zinc-finger fold. K333 is covalently cross-linked (Glycyl lysine isopeptide (Lys-Gly) (interchain with G-Cter in SUMO2)). A C2H2-type 3; atypical zinc finger spans residues 406-430 (IQCPNQGCEAVYSSVSGLKAHLGSC). Residues 440–463 (YKCLLCQKEFVSESGVKYHINSVH) form a C2H2-type 4 zinc finger. Residues 486–567 (QRQQEEEKRR…PKTNHKRGRK (82 aa)) form a disordered region. The span at 495 to 508 (RQQHRSRRSLRRRQ) shows a compositional bias: basic residues. Positions 523 to 532 (VGKDQRRNNE) are enriched in basic and acidic residues. Positions 556–567 (KPPKTNHKRGRK) are enriched in basic residues.

It belongs to the krueppel C2H2-type zinc-finger protein family.

Its subcellular location is the nucleus. In terms of biological role, may be involved in transcriptional regulation. In Homo sapiens (Human), this protein is Zinc finger protein 512 (ZNF512).